We begin with the raw amino-acid sequence, 151 residues long: uncharacterized protein (151 aa).

Residues 1–24 form the signal peptide; sequence MYYSIIIACLVLLLCLVIYVGHRA.

It belongs to the asfivirus EP152R family.

Its subcellular location is the virion. This is an uncharacterized protein from Ornithodoros (relapsing fever ticks).